Here is a 1435-residue protein sequence, read N- to C-terminus: Gag-Pol polyprotein (1435 aa).

A lipid anchor (N-myristoyl glycine; by host) is attached at G2. Residues 7–31 form an interaction with Gp41 region; it reads VLSGGKLDAWEKIRLRPGGKKKYRL. The segment at 8 to 43 is interaction with host CALM1; it reads LSGGKLDAWEKIRLRPGGKKKYRLKHLVWASRELER. The interaction with host AP3D1 stretch occupies residues 12–19; sequence KLDAWEKI. Positions 14 to 33 are interaction with membrane phosphatidylinositol 4,5-bisphosphate and RNA; it reads DAWEKIRLRPGGKKKYRLKH. The Nuclear export signal signature appears at 16 to 22; that stretch reads WEKIRLR. Residues 26 to 32 carry the Nuclear localization signal motif; sequence KKKYRLK. The interaction with membrane phosphatidylinositol 4,5-bisphosphate stretch occupies residues 73 to 77; that stretch reads EELKS. The tract at residues 108–127 is disordered; the sequence is QNKSQQKTQQAAADKEKDNK. Residues 109 to 118 show a composition bias toward polar residues; it reads NKSQQKTQQA. At Y132 the chain carries Phosphotyrosine; by host. An interaction with human PPIA/CYPA and NUP153 region spans residues 189-227; the sequence is NTVGGHQAAMQMLKDTINEEAAEWDRVHPVHAGPIPPGQ. Residues 277-363 are dimerization/Multimerization of capsid protein p24; that stretch reads YSPVSILDIK…GGPSHKARVL (87 aa). 2 CCHC-type zinc fingers span residues 391–408 and 412–429; these read VKCF…NCRA and KGCW…DCTE. The disordered stretch occupies residues 445 to 482; sequence EARKFSPEQARTNSPTSRELRVRRGDDPLSEAGAAEGQ. Residues 462–471 are compositionally biased toward basic and acidic residues; that stretch reads RELRVRRGDD. Residues 489 to 493 form a dimerization of protease region; the sequence is PQITL. The 70-residue stretch at 508–577 folds into the Peptidase A2 domain; the sequence is REALLDTGAD…TPVNIIGRNI (70 aa). Catalysis depends on D513, which acts as the For protease activity; shared with dimeric partner. Dimerization of protease regions lie at residues 537–543 and 576–588; these read GIGGFIK and NILT…LNFP. The Reverse transcriptase domain maps to 631–821; that stretch reads EGKISRIGPE…PPFLWMGYEL (191 aa). Mg(2+)-binding residues include D697, D772, and D773. The RT 'primer grip' stretch occupies residues 814–822; the sequence is FLWMGYELH. The short motif at 985–1001 is the Tryptophan repeat motif element; that stretch reads WETWWTEYWQATWIPEW. The region spanning 1021–1144 is the RNase H type-1 domain; the sequence is IAGAETYYID…VDKLVSSGVR (124 aa). Mg(2+) contacts are provided by D1030, E1065, D1085, and D1136. The Integrase-type zinc-finger motif lies at 1150-1191; that stretch reads DGIDKAQEEHERYHNNWRAVASDFNLPPIVAKEIVASCDKCQ. Zn(2+)-binding residues include H1159, H1163, C1187, and C1190. In terms of domain architecture, Integrase catalytic spans 1201 to 1351; that stretch reads VDCSPGIWQL…SAGERIIDII (151 aa). Mg(2+)-binding residues include D1211, D1263, and E1299. Residues 1370–1417 constitute a DNA-binding region (integrase-type); the sequence is FRVYYRDSRDPIWKGPAKLLWKGEGAVVIQDNSEIKVVPRREAKIIRD.

Homotrimer; further assembles as hexamers of trimers. Interacts with gp41 (via C-terminus). Interacts with host CALM1; this interaction induces a conformational change in the Matrix protein, triggering exposure of the myristate group. Interacts with host AP3D1; this interaction allows the polyprotein trafficking to multivesicular bodies during virus assembly. Part of the pre-integration complex (PIC) which is composed of viral genome, matrix protein, Vpr and integrase. As to quaternary structure, homodimer; the homodimer further multimerizes as homohexamers or homopentamers. Interacts with human PPIA/CYPA; This interaction stabilizes the capsid. Interacts with human NUP153. Interacts with host PDZD8; this interaction stabilizes the capsid. Interacts with monkey TRIM5; this interaction destabilizes the capsid. In terms of assembly, homodimer, whose active site consists of two apposed aspartic acid residues. Heterodimer of p66 RT and p51 RT (RT p66/p51). Heterodimerization of RT is essential for DNA polymerase activity. The overall folding of the subdomains is similar in p66 RT and p51 RT but the spatial arrangements of the subdomains are dramatically different. As to quaternary structure, homodimer; possibly can form homotetramer. Part of the pre-integration complex (PIC) which is composed of viral genome, matrix protein, Vpr and integrase. Interacts with human SMARCB1/INI1 and human PSIP1/LEDGF isoform 1. Interacts with human KPNA3; this interaction might play a role in nuclear import of the pre-integration complex. Interacts with human NUP153; this interaction might play a role in nuclear import of the pre-integration complex. The cofactor is Mg(2+). Specific enzymatic cleavages by the viral protease yield mature proteins. The protease is released by autocatalytic cleavage. The polyprotein is cleaved during and after budding, this process is termed maturation. Proteolytic cleavage of p66 RT removes the RNase H domain to yield the p51 RT subunit. Nucleocapsid protein p7 might be further cleaved after virus entry. Post-translationally, tyrosine phosphorylated presumably in the virion by a host kinase. Phosphorylation is apparently not a major regulator of membrane association. In terms of processing, phosphorylated possibly by host MAPK1; this phosphorylation is necessary for Pin1-mediated virion uncoating. Methylated by host PRMT6, impairing its function by reducing RNA annealing and the initiation of reverse transcription.

The protein resides in the host cell membrane. The protein localises to the host endosome. It is found in the host multivesicular body. Its subcellular location is the virion membrane. It localises to the host nucleus. The protein resides in the host cytoplasm. The protein localises to the virion. It carries out the reaction Specific for a P1 residue that is hydrophobic, and P1' variable, but often Pro.. The enzyme catalyses Endohydrolysis of RNA in RNA/DNA hybrids. Three different cleavage modes: 1. sequence-specific internal cleavage of RNA. Human immunodeficiency virus type 1 and Moloney murine leukemia virus enzymes prefer to cleave the RNA strand one nucleotide away from the RNA-DNA junction. 2. RNA 5'-end directed cleavage 13-19 nucleotides from the RNA end. 3. DNA 3'-end directed cleavage 15-20 nucleotides away from the primer terminus.. The catalysed reaction is 3'-end directed exonucleolytic cleavage of viral RNA-DNA hybrid.. It catalyses the reaction DNA(n) + a 2'-deoxyribonucleoside 5'-triphosphate = DNA(n+1) + diphosphate. With respect to regulation, protease: The viral protease is inhibited by many synthetic protease inhibitors (PIs), such as amprenavir, atazanavir, indinavir, loprinavir, nelfinavir, ritonavir and saquinavir. Use of protease inhibitors in tritherapy regimens permit more ambitious therapeutic strategies. Reverse transcriptase/ribonuclease H: RT can be inhibited either by nucleoside RT inhibitors (NRTIs) or by non nucleoside RT inhibitors (NNRTIs). NRTIs act as chain terminators, whereas NNRTIs inhibit DNA polymerization by binding a small hydrophobic pocket near the RT active site and inducing an allosteric change in this region. Classical NRTIs are abacavir, adefovir (PMEA), didanosine (ddI), lamivudine (3TC), stavudine (d4T), tenofovir (PMPA), zalcitabine (ddC), and zidovudine (AZT). Classical NNRTIs are atevirdine (BHAP U-87201E), delavirdine, efavirenz (DMP-266), emivirine (I-EBU), and nevirapine (BI-RG-587). The tritherapies used as a basic effective treatment of AIDS associate two NRTIs and one NNRTI. In terms of biological role, mediates, with Gag polyprotein, the essential events in virion assembly, including binding the plasma membrane, making the protein-protein interactions necessary to create spherical particles, recruiting the viral Env proteins, and packaging the genomic RNA via direct interactions with the RNA packaging sequence (Psi). Gag-Pol polyprotein may regulate its own translation, by the binding genomic RNA in the 5'-UTR. At low concentration, the polyprotein would promote translation, whereas at high concentration, the polyprotein would encapsidate genomic RNA and then shut off translation. Targets the polyprotein to the plasma membrane via a multipartite membrane-binding signal, that includes its myristoylated N-terminus. Matrix protein is part of the pre-integration complex. Implicated in the release from host cell mediated by Vpu. Binds to RNA. Functionally, forms the conical core that encapsulates the genomic RNA-nucleocapsid complex in the virion. Most core are conical, with only 7% tubular. The core is constituted by capsid protein hexamer subunits. The core is disassembled soon after virion entry. Host restriction factors such as TRIM5-alpha or TRIMCyp bind retroviral capsids and cause premature capsid disassembly, leading to blocks in reverse transcription. Capsid restriction by TRIM5 is one of the factors which restricts HIV-1 to the human species. Host PIN1 apparently facilitates the virion uncoating. On the other hand, interactions with PDZD8 or CYPA stabilize the capsid. Its function is as follows. Encapsulates and protects viral dimeric unspliced genomic RNA (gRNA). Binds these RNAs through its zinc fingers. Acts as a nucleic acid chaperone which is involved in rearangement of nucleic acid secondary structure during gRNA retrotranscription. Also facilitates template switch leading to recombination. As part of the polyprotein, participates in gRNA dimerization, packaging, tRNA incorporation and virion assembly. In terms of biological role, aspartyl protease that mediates proteolytic cleavages of Gag and Gag-Pol polyproteins during or shortly after the release of the virion from the plasma membrane. Cleavages take place as an ordered, step-wise cascade to yield mature proteins. This process is called maturation. Displays maximal activity during the budding process just prior to particle release from the cell. Also cleaves Nef and Vif, probably concomitantly with viral structural proteins on maturation of virus particles. Hydrolyzes host EIF4GI and PABP1 in order to shut off the capped cellular mRNA translation. The resulting inhibition of cellular protein synthesis serves to ensure maximal viral gene expression and to evade host immune response. Also mediates cleavage of host YTHDF3. Mediates cleavage of host CARD8, thereby activating the CARD8 inflammasome, leading to the clearance of latent HIV-1 in patient CD4(+) T-cells after viral reactivation; in contrast, HIV-1 can evade CARD8-sensing when its protease remains inactive in infected cells prior to viral budding. Multifunctional enzyme that converts the viral RNA genome into dsDNA in the cytoplasm, shortly after virus entry into the cell. This enzyme displays a DNA polymerase activity that can copy either DNA or RNA templates, and a ribonuclease H (RNase H) activity that cleaves the RNA strand of RNA-DNA heteroduplexes in a partially processive 3' to 5' endonucleasic mode. Conversion of viral genomic RNA into dsDNA requires many steps. A tRNA(3)-Lys binds to the primer-binding site (PBS) situated at the 5'-end of the viral RNA. RT uses the 3' end of the tRNA primer to perform a short round of RNA-dependent minus-strand DNA synthesis. The reading proceeds through the U5 region and ends after the repeated (R) region which is present at both ends of viral RNA. The portion of the RNA-DNA heteroduplex is digested by the RNase H, resulting in a ssDNA product attached to the tRNA primer. This ssDNA/tRNA hybridizes with the identical R region situated at the 3' end of viral RNA. This template exchange, known as minus-strand DNA strong stop transfer, can be either intra- or intermolecular. RT uses the 3' end of this newly synthesized short ssDNA to perform the RNA-dependent minus-strand DNA synthesis of the whole template. RNase H digests the RNA template except for two polypurine tracts (PPTs) situated at the 5'-end and near the center of the genome. It is not clear if both polymerase and RNase H activities are simultaneous. RNase H probably can proceed both in a polymerase-dependent (RNA cut into small fragments by the same RT performing DNA synthesis) and a polymerase-independent mode (cleavage of remaining RNA fragments by free RTs). Secondly, RT performs DNA-directed plus-strand DNA synthesis using the PPTs that have not been removed by RNase H as primers. PPTs and tRNA primers are then removed by RNase H. The 3' and 5' ssDNA PBS regions hybridize to form a circular dsDNA intermediate. Strand displacement synthesis by RT to the PBS and PPT ends produces a blunt ended, linear dsDNA copy of the viral genome that includes long terminal repeats (LTRs) at both ends. Functionally, catalyzes viral DNA integration into the host chromosome, by performing a series of DNA cutting and joining reactions. This enzyme activity takes place after virion entry into a cell and reverse transcription of the RNA genome in dsDNA. The first step in the integration process is 3' processing. This step requires a complex comprising the viral genome, matrix protein, Vpr and integrase. This complex is called the pre-integration complex (PIC). The integrase protein removes 2 nucleotides from each 3' end of the viral DNA, leaving recessed CA OH's at the 3' ends. In the second step, the PIC enters cell nucleus. This process is mediated through integrase and Vpr proteins, and allows the virus to infect a non dividing cell. This ability to enter the nucleus is specific of lentiviruses, other retroviruses cannot and rely on cell division to access cell chromosomes. In the third step, termed strand transfer, the integrase protein joins the previously processed 3' ends to the 5' ends of strands of target cellular DNA at the site of integration. The 5'-ends are produced by integrase-catalyzed staggered cuts, 5 bp apart. A Y-shaped, gapped, recombination intermediate results, with the 5'-ends of the viral DNA strands and the 3' ends of target DNA strands remaining unjoined, flanking a gap of 5 bp. The last step is viral DNA integration into host chromosome. This involves host DNA repair synthesis in which the 5 bp gaps between the unjoined strands are filled in and then ligated. Since this process occurs at both cuts flanking the HIV genome, a 5 bp duplication of host DNA is produced at the ends of HIV-1 integration. Alternatively, Integrase may catalyze the excision of viral DNA just after strand transfer, this is termed disintegration. This chain is Gag-Pol polyprotein (gag-pol), found in Homo sapiens (Human).